A 340-amino-acid chain; its full sequence is Photosystem II assembly lipoprotein Ycf48 (340 aa).

Positions 1-26 (MTSVLGLLKPLKKAIAAIAVLVLCIG) are cleaved as a signal peptide. Cys-27 is lipidated: N-palmitoyl cysteine. A lipid anchor (S-diacylglycerol cysteine) is attached at Cys-27.

The protein belongs to the Ycf48 family. As to quaternary structure, part of early PSII assembly complexes which includes D1 (psbA) and PsbI; not found in mature PSII. Binds to the lumenal side of PSII complexes. Interacts with YidC.

It localises to the cellular thylakoid membrane. Its function is as follows. A factor required for optimal assembly of photosystem II (PSII), acting in the early stages of PSII assembly. Also plays a role in replacement of photodamaged D1 (psbA). Assists YidC in synthesis of chlorophyll-binding proteins. The protein is Photosystem II assembly lipoprotein Ycf48 of Picosynechococcus sp. (strain ATCC 27264 / PCC 7002 / PR-6) (Agmenellum quadruplicatum).